The chain runs to 378 residues: Ferredoxin--NADP reductase, root isozyme 1, chloroplastic (378 aa).

The transit peptide at 1 to 65 directs the protein to the chloroplast; it reads MALSTTPSQM…KRSTICMSLQ (65 aa). Residues 93-221 enclose the FAD-binding FR-type domain; the sequence is KEPYTATIVS…TGPSGKVMLL (129 aa). A disulfide bridge links C196 with C201. S197 is modified (phosphoserine). Residue T229 is modified to Phosphothreonine. NADP(+) is bound at residue 231–249; the sequence is IMIATGTGVAPYRGYLRRM. A coiled-coil region spans residues 349–373; the sequence is LKRVAEERGESWEQKLTQLRKNKQW.

This sequence belongs to the ferredoxin--NADP reductase type 1 family. It depends on FAD as a cofactor. Expressed in shoots and roots. Less abundant in roots than RFNR2.

It localises to the plastid. Its subcellular location is the chloroplast. The catalysed reaction is 2 reduced [2Fe-2S]-[ferredoxin] + NADP(+) + H(+) = 2 oxidized [2Fe-2S]-[ferredoxin] + NADPH. Maintains the supply of reduced ferredoxin under non-photosynthetic conditions. The polypeptide is Ferredoxin--NADP reductase, root isozyme 1, chloroplastic (RFNR1) (Arabidopsis thaliana (Mouse-ear cress)).